A 620-amino-acid polypeptide reads, in one-letter code: Probable protein arginine N-methyltransferase 3 (620 aa).

Residues 1–17 (MATREHELRPEQERLGE) are compositionally biased toward basic and acidic residues. A disordered region spans residues 1–45 (MATREHELRPEQERLGEDREEYEDGEEEEEEGEEGWDDWESDGDD). Residues 18 to 45 (DREEYEDGEEEEEEGEEGWDDWESDGDD) show a composition bias toward acidic residues. The segment at 55–78 (LLCLFCSARFDSESSLFSHCASEH) adopts a C2H2-type 1 zinc-finger fold. Residues 110-137 (NKCWSCGQVFSSNSELCGHLHALEIPQL) form a C2H2-type 2; degenerate zinc finger. An SAM-dependent MTase PRMT-type domain is found at 253–582 (DESYFGSYSS…DECPAVMIRS (330 aa)). Positions 275, 299, 321, 323, and 364 each coordinate S-adenosyl-L-homocysteine. Active-site residues include Glu-383 and Glu-392.

The protein belongs to the class I-like SAM-binding methyltransferase superfamily. Protein arginine N-methyltransferase family.

It is found in the cytoplasm. The protein resides in the cytosol. It carries out the reaction L-arginyl-[protein] + S-adenosyl-L-methionine = N(omega)-methyl-L-arginyl-[protein] + S-adenosyl-L-homocysteine + H(+). The enzyme catalyses L-arginyl-[protein] + 2 S-adenosyl-L-methionine = N(omega),N(omega)-dimethyl-L-arginyl-[protein] + 2 S-adenosyl-L-homocysteine + 2 H(+). Protein-arginine N-methyltransferase that catalyzes both the monomethylation and asymmetric dimethylation of the guanidino nitrogens of arginine residues in target proteins, and therefore falls into the group of type I methyltransferases. The protein is Probable protein arginine N-methyltransferase 3 (PRMT3) of Oryza sativa subsp. japonica (Rice).